A 511-amino-acid polypeptide reads, in one-letter code: ADP,ATP carrier protein 4 (511 aa).

12 helical membrane passes run 34 to 54, 70 to 90, 102 to 122, 157 to 177, 192 to 212, 231 to 251, 296 to 316, 330 to 350, 361 to 381, 390 to 410, 453 to 473, and 476 to 496; these read VSKF…QNLI, IISF…TAIY, IFYL…YVIF, FSLF…LLFW, FYPL…QFLE, FHTL…IIAI, LIAT…GPWK, AAFI…FVVL, FTAA…FFAV, LIIA…IGAI, LGKS…PSAS, and SIST…LWAT.

This sequence belongs to the ADP/ATP translocase tlc family.

The protein resides in the cell membrane. Provides the rickettsial cell with host ATP in exchange for rickettsial ADP. This is an obligate exchange system. This energy acquiring activity is an important component of rickettsial parasitism. This is ADP,ATP carrier protein 4 (tlcD) from Rickettsia conorii (strain ATCC VR-613 / Malish 7).